Consider the following 275-residue polypeptide: Methylesterase 10 (275 aa).

Serine 96 (acyl-ester intermediate) is an active-site residue. Active-site charge relay system residues include aspartate 225 and histidine 253.

This sequence belongs to the AB hydrolase superfamily. Methylesterase family.

It catalyses the reaction methyl (-)-jasmonate + H2O = jasmonate + methanol + H(+). The protein operates within plant hormone biosynthesis. It functions in the pathway lipid metabolism; oxylipin biosynthesis. Its function is as follows. Methylesterase shown to have methyl jasmonate (MeJA) esterase activity in vitro. This chain is Methylesterase 10, found in Arabidopsis thaliana (Mouse-ear cress).